The sequence spans 480 residues: Membrane-bound lytic murein transglycosylase F (480 aa).

A signal peptide spans 1 to 15; that stretch reads MNRILLTLLTLTLLA. Residues 16–259 are non-LT domain; the sequence is GCQRVAVEET…HLDEKYFAHV (244 aa). Residues 260–480 are LT domain; sequence KRFDYVDTRA…EKAITGAQPE (221 aa). The active site involves Glu304.

It in the N-terminal section; belongs to the bacterial solute-binding protein 3 family. The protein in the C-terminal section; belongs to the transglycosylase Slt family.

The protein localises to the cell outer membrane. The catalysed reaction is Exolytic cleavage of the (1-&gt;4)-beta-glycosidic linkage between N-acetylmuramic acid (MurNAc) and N-acetylglucosamine (GlcNAc) residues in peptidoglycan, from either the reducing or the non-reducing ends of the peptidoglycan chains, with concomitant formation of a 1,6-anhydrobond in the MurNAc residue.. In terms of biological role, murein-degrading enzyme that degrades murein glycan strands and insoluble, high-molecular weight murein sacculi, with the concomitant formation of a 1,6-anhydromuramoyl product. Lytic transglycosylases (LTs) play an integral role in the metabolism of the peptidoglycan (PG) sacculus. Their lytic action creates space within the PG sacculus to allow for its expansion as well as for the insertion of various structures such as secretion systems and flagella. This Shewanella woodyi (strain ATCC 51908 / MS32) protein is Membrane-bound lytic murein transglycosylase F.